A 705-amino-acid polypeptide reads, in one-letter code: Polyribonucleotide nucleotidyltransferase (705 aa).

Mg(2+) is bound by residues Asp-485 and Asp-491. In terms of domain architecture, KH spans 552–611 (PKVFTMSINPSKIKDVIGAGGKTINKIIDETGVKIDIKEDGSVFVTAEDYESGKKALAMI). Positions 621 to 689 (GEVYLGKVTK…SMGRVNLSRK (69 aa)) constitute an S1 motif domain.

This sequence belongs to the polyribonucleotide nucleotidyltransferase family. Mg(2+) serves as cofactor.

It localises to the cytoplasm. The catalysed reaction is RNA(n+1) + phosphate = RNA(n) + a ribonucleoside 5'-diphosphate. Involved in mRNA degradation. Catalyzes the phosphorolysis of single-stranded polyribonucleotides processively in the 3'- to 5'-direction. In Clostridium novyi (strain NT), this protein is Polyribonucleotide nucleotidyltransferase.